Here is a 615-residue protein sequence, read N- to C-terminus: Gluconate 2-dehydrogenase flavoprotein (615 aa).

The signal sequence occupies residues 1–22 (MERGERVSVPVSGYSRGEGVTV). Catalysis depends on His542, which acts as the Proton acceptor.

Belongs to the GMC oxidoreductase family. As to quaternary structure, heterotrimer. FAD is required as a cofactor.

The protein localises to the cell membrane. It carries out the reaction D-gluconate + A = 2-dehydro-D-gluconate + AH2. Part of the heterotrimer that catalyzes the conversion of D-gluconate to 2-dehydro-D-gluconate. This subunit functions as the dehydrogenase. The chain is Gluconate 2-dehydrogenase flavoprotein from Pantoea cypripedii (Pectobacterium cypripedii).